The following is a 124-amino-acid chain: MSTINQLVRFSRVRKVTKSNVPALSKCPQKRGVCTRVYTTTPKKPNSALRKVCRVRLTNGHEVTAYIGGEGHNLQEHSVILIRGGRVKDLPGVRYHVIRGALDCSGVKDRKKGRSKYGVKKLKV.

Position 89 is a 3-methylthioaspartic acid (Asp-89).

It belongs to the universal ribosomal protein uS12 family. In terms of assembly, part of the 30S ribosomal subunit. Contacts proteins S8 and S17. May interact with IF1 in the 30S initiation complex.

Its function is as follows. With S4 and S5 plays an important role in translational accuracy. Interacts with and stabilizes bases of the 16S rRNA that are involved in tRNA selection in the A site and with the mRNA backbone. Located at the interface of the 30S and 50S subunits, it traverses the body of the 30S subunit contacting proteins on the other side and probably holding the rRNA structure together. The combined cluster of proteins S8, S12 and S17 appears to hold together the shoulder and platform of the 30S subunit. The polypeptide is Small ribosomal subunit protein uS12 (Buchnera aphidicola subsp. Cinara cedri (strain Cc)).